The primary structure comprises 537 residues: 2-succinyl-5-enolpyruvyl-6-hydroxy-3-cyclohexene-1-carboxylate synthase (537 aa).

It belongs to the TPP enzyme family. MenD subfamily. Homodimer. Requires Mg(2+) as cofactor. Mn(2+) is required as a cofactor. Thiamine diphosphate serves as cofactor.

The enzyme catalyses isochorismate + 2-oxoglutarate + H(+) = 5-enolpyruvoyl-6-hydroxy-2-succinyl-cyclohex-3-ene-1-carboxylate + CO2. The protein operates within quinol/quinone metabolism; 1,4-dihydroxy-2-naphthoate biosynthesis; 1,4-dihydroxy-2-naphthoate from chorismate: step 2/7. Its pathway is quinol/quinone metabolism; menaquinone biosynthesis. Its function is as follows. Catalyzes the thiamine diphosphate-dependent decarboxylation of 2-oxoglutarate and the subsequent addition of the resulting succinic semialdehyde-thiamine pyrophosphate anion to isochorismate to yield 2-succinyl-5-enolpyruvyl-6-hydroxy-3-cyclohexene-1-carboxylate (SEPHCHC). The chain is 2-succinyl-5-enolpyruvyl-6-hydroxy-3-cyclohexene-1-carboxylate synthase from Dechloromonas aromatica (strain RCB).